A 445-amino-acid polypeptide reads, in one-letter code: Tubulin alpha-1 chain (445 aa).

Gln-11 is a GTP binding site. N6-acetyllysine is present on Lys-40. 7 residues coordinate GTP: Glu-71, Ser-140, Gly-144, Thr-145, Thr-179, Asn-206, and Asn-228. A Mg(2+)-binding site is contributed by Glu-71. Residue Glu-254 is part of the active site.

Belongs to the tubulin family. As to quaternary structure, dimer of alpha and beta chains. A typical microtubule is a hollow water-filled tube with an outer diameter of 25 nm and an inner diameter of 15 nM. Alpha-beta heterodimers associate head-to-tail to form protofilaments running lengthwise along the microtubule wall with the beta-tubulin subunit facing the microtubule plus end conferring a structural polarity. Microtubules usually have 13 protofilaments but different protofilament numbers can be found in some organisms and specialized cells. The cofactor is Mg(2+). In terms of processing, acetylation of alpha chains at Lys-40 stabilizes microtubules and affects affinity and processivity of microtubule motors. This modification has a role in multiple cellular functions, ranging from cell motility, cell cycle progression or cell differentiation to intracellular trafficking and signaling.

The protein localises to the cytoplasm. The protein resides in the cytoskeleton. It catalyses the reaction GTP + H2O = GDP + phosphate + H(+). In terms of biological role, tubulin is the major constituent of microtubules, a cylinder consisting of laterally associated linear protofilaments composed of alpha- and beta-tubulin heterodimers. Microtubules grow by the addition of GTP-tubulin dimers to the microtubule end, where a stabilizing cap forms. Below the cap, tubulin dimers are in GDP-bound state, owing to GTPase activity of alpha-tubulin. This is Tubulin alpha-1 chain from Stylonychia lemnae (Ciliate).